Consider the following 631-residue polypeptide: ATP-dependent RNA helicase mrh4, mitochondrial (631 aa).

The N-terminal 45 residues, 1 to 45, are a transit peptide targeting the mitochondrion; sequence MNRLGRLPLPLPPSVCLFCRFRATASLPSSLQATRSMATARLRRR. Residues 68-112 are disordered; the sequence is KERFGPFAGMNQTEARIRETPRARSRAAQKRSGEPEEDSQKESPL. The segment covering 98–108 has biased composition (basic and acidic residues); it reads RSGEPEEDSQK. Residues 141 to 174 carry the Q motif motif; that stretch reads TSFDQFQLLPVVRNSISSQALPGLVDVTPTPIQR. Positions 180–193 are enriched in basic and acidic residues; it reads LLEEPKTEKKPTKA. Positions 180–199 are disordered; it reads LLEEPKTEKKPTKADDDEPR. The 213-residue stretch at 194–406 folds into the Helicase ATP-binding domain; the sequence is DDDEPRYDQY…RKRYPDIKRL (213 aa). Residue 207-214 coordinates ATP; that stretch reads AETGSGKT. Residues 229-249 are disordered; sequence EARDKELEKKEQEEKAREREE. The short motif at 353–356 is the DEAD box element; the sequence is DEAD. In terms of domain architecture, Helicase C-terminal spans 455-631; it reads GPYASYVAPK…EGMFRGQALI (177 aa).

It belongs to the DEAD box helicase family. MRH4 subfamily.

Its subcellular location is the mitochondrion. The enzyme catalyses ATP + H2O = ADP + phosphate + H(+). ATP-binding RNA helicase involved in mitochondrial RNA metabolism. Required for maintenance of mitochondrial DNA. The sequence is that of ATP-dependent RNA helicase mrh4, mitochondrial (mrh4) from Aspergillus fumigatus (strain ATCC MYA-4609 / CBS 101355 / FGSC A1100 / Af293) (Neosartorya fumigata).